Consider the following 131-residue polypeptide: MPVTDSIADYITRLRNAGRAKNKTTDIPYSKLRENISQLLLEKGYIKGFTVITTEKFPFIRVEMKYTAAGVPSIKEITRVSRPGRRMYEGKDIKKYLGGLGLYIISTSKGVITDKEAREQGVGGEILFRIY.

This sequence belongs to the universal ribosomal protein uS8 family. Part of the 30S ribosomal subunit. Contacts proteins S5 and S12.

One of the primary rRNA binding proteins, it binds directly to 16S rRNA central domain where it helps coordinate assembly of the platform of the 30S subunit. This is Small ribosomal subunit protein uS8 from Chlorobium phaeovibrioides (strain DSM 265 / 1930) (Prosthecochloris vibrioformis (strain DSM 265)).